The following is a 388-amino-acid chain: Succinate--CoA ligase [ADP-forming] subunit beta (388 aa).

An ATP-grasp domain is found at 9-245; sequence KALLKKYGVS…KSQENERELK (237 aa). Residues Lys-46, 53–55, Glu-100, Tyr-103, and Glu-108 contribute to the ATP site; that span reads GRG. Residues Asn-200 and Asp-214 each coordinate Mg(2+). Substrate-binding positions include Asn-265 and 322–324; that span reads GIV.

It belongs to the succinate/malate CoA ligase beta subunit family. As to quaternary structure, heterotetramer of two alpha and two beta subunits. Mg(2+) serves as cofactor.

The catalysed reaction is succinate + ATP + CoA = succinyl-CoA + ADP + phosphate. It carries out the reaction GTP + succinate + CoA = succinyl-CoA + GDP + phosphate. It functions in the pathway carbohydrate metabolism; tricarboxylic acid cycle; succinate from succinyl-CoA (ligase route): step 1/1. In terms of biological role, succinyl-CoA synthetase functions in the citric acid cycle (TCA), coupling the hydrolysis of succinyl-CoA to the synthesis of either ATP or GTP and thus represents the only step of substrate-level phosphorylation in the TCA. The beta subunit provides nucleotide specificity of the enzyme and binds the substrate succinate, while the binding sites for coenzyme A and phosphate are found in the alpha subunit. The sequence is that of Succinate--CoA ligase [ADP-forming] subunit beta from Acinetobacter baylyi (strain ATCC 33305 / BD413 / ADP1).